A 528-amino-acid polypeptide reads, in one-letter code: MGADNELSEFEKQRLANIAERDALLKKLSLDAQSSGLFPPKSARSSPGGQTKPKKKPPPKKVKKEDEHPVPRRMSSRLRGLAADSEVAKRKADEQYEAAQQAERAKRVRKSDAFSFSEMLVSGQKLSGDSLIGVDVVTKGVAMPYQRTFGDEDIKKTTDKELKALREEMSGLRLWEAWEPNRIKLTPERIYTMTFHPSEAKPLIFAGDKMGNLGVLDASQEKPTSAVKQEDDEEDAEDDDPDPVLTTLKPHTRTISSLHIHPSKPTHLYSASYDSSIRELDLEKTTSVEKYAPESTSDDIPISGIDMAPDDPNTLYWTTLDGAFGRYDTRASRRSAVATWQLSEKKIGGFSLFPTHPHFFATASLDRTMRLWDIRKLSHDDPVPVGEHVSRLSVSHAAFNSAGQIATSSYDDTLKIYDFGSKGIAAWEPGYTLSDAEMKPDTIVRHNCQTGRWVTILRPQWQANPQSSIQRFCIGNMNRFVDVYSSSGDQLAQLGGDGITAVPAVAVFHCSTNWIAGGTASGKICLWM.

2 disordered regions span residues 32-98 and 217-243; these read AQSS…QYEA and DASQEKPTSAVKQEDDEEDAEDDDPDP. The segment covering 52–62 has biased composition (basic residues); that stretch reads KPKKKPPPKKV. A WD 1 repeat occupies 185–226; the sequence is LTPERIYTMTFHPSEAKPLIFAGDKMGNLGVLDASQEKPTSA. Residues 230–242 are compositionally biased toward acidic residues; it reads EDDEEDAEDDDPD. WD repeat units follow at residues 250–290, 297–337, 342–382, 389–428, 451–494, and 497–528; these read PHTR…SVEK, SDDI…RSAV, LSEK…HDDP, VSRLSVSHAAFNSAGQIATSSYDDTLKIYDFGSKGIAAWE, GRWV…LAQL, and DGITAVPAVAVFHCSTNWIAGGTASGKICLWM.

Belongs to the WD repeat DDB2/WDR76 family.

In terms of biological role, DNA-binding protein that binds to both single- and double-stranded DNA. Binds preferentially to UV-damaged DNA. May be involved in DNA-metabolic processes. The polypeptide is DNA damage-binding protein cmr1 (Aspergillus fumigatus (strain CBS 144.89 / FGSC A1163 / CEA10) (Neosartorya fumigata)).